Reading from the N-terminus, the 348-residue chain is Rhodopsin (348 aa).

N-acetylmethionine is present on Met-1. At 1–36 the chain is on the extracellular side; the sequence is MNGTEGPNFYVPFSNKTGVVRSPFEYPQYYLAEPWQ. N-linked (GlcNAc...) asparagine glycosylation is found at Asn-2 and Asn-15. A helical transmembrane segment spans residues 37 to 61; the sequence is FSMLAAYMFLLIVLGFPINFLTLYV. Residues 62–73 lie on the Cytoplasmic side of the membrane; sequence TVQHKKLRTPLN. A helical transmembrane segment spans residues 74–96; the sequence is YILLNLAVADLFMVFGGFTTTLY. Over 97–110 the chain is Extracellular; it reads TSLHGYFVFGPTGC. The cysteines at positions 110 and 187 are disulfide-linked. The helical transmembrane segment at 111-133 threads the bilayer; that stretch reads NLEGFFATLGGEIALWSLVVLAI. Residues 134-136 carry the 'Ionic lock' involved in activated form stabilization motif; the sequence is ERY. Topologically, residues 134–152 are cytoplasmic; the sequence is ERYVVVCKPMSNFRFGENH. The helical transmembrane segment at 153-173 threads the bilayer; it reads AIMGVAFTWVMALACAAPPLV. At 174-202 the chain is on the extracellular side; sequence GWSRYIPEGMQCSCGIDYYTLKPEVNNES. Glu-201 provides a ligand contact to Zn(2+). The chain crosses the membrane as a helical span at residues 203-224; sequence FVIYMFVVHFTIPMIVIFFCYG. The Cytoplasmic portion of the chain corresponds to 225 to 252; the sequence is QLVFTVKEAAAQQQESATTQKAEKEVTR. A helical transmembrane segment spans residues 253-274; that stretch reads MVIIMVIAFLICWVPYASVAFY. The Extracellular portion of the chain corresponds to 275-286; it reads IFTHQGSNFGPI. Residue Gln-279 participates in Zn(2+) binding. Residues 287–308 traverse the membrane as a helical segment; it reads FMTLPAFFAKSSSIYNPVIYIM. Lys-296 carries the post-translational modification N6-(retinylidene)lysine. The Cytoplasmic segment spans residues 309 to 348; that stretch reads MNKQFRNCMLTTLCCGKNPLGDDEASTTGSKTETSQVAPA. 2 S-palmitoyl cysteine lipidation sites follow: Cys-322 and Cys-323. The segment at 330 to 348 is interaction with SAG; it reads DDEASTTGSKTETSQVAPA. Position 334 is a phosphoserine (Ser-334). 2 positions are modified to phosphothreonine: Thr-335 and Thr-336. Ser-338 is modified (phosphoserine). 2 positions are modified to phosphothreonine: Thr-340 and Thr-342. Phosphoserine is present on Ser-343.

The protein belongs to the G-protein coupled receptor 1 family. Opsin subfamily. In terms of assembly, homodimer. May form a complex composed of RHO, GRK1 and RCVRN in a Ca(2+)-dependent manner; RCVRN prevents the interaction between GRK1 and RHO. Interacts with GRK1. Interacts (phosphorylated form) with SAG. Interacts with GNAT1. Interacts with GNAT3. SAG and G-proteins compete for a common binding site. Interacts with PRCD; the interaction promotes PRCD stability. Forms a complex with ASAP1 and ARF4. Forms a complex with ASAP1, RAB11A, Rabin8/RAB3IP, ARF4 and RAB11FIP3; the complex regulates Golgi-to-cilia rhodopsin/RHO transport in photoreceptors. Phosphorylated on some or all of the serine and threonine residues present in the C-terminal region. In terms of processing, contains one covalently linked retinal chromophore. Upon light absorption, the covalently bound 11-cis-retinal is converted to all-trans-retinal. After hydrolysis of the Schiff base and release of the covalently bound all-trans-retinal, active rhodopsin is regenerated by binding of a fresh molecule of 11-cis-retinal.

The protein resides in the membrane. It is found in the cell projection. The protein localises to the cilium. Its subcellular location is the photoreceptor outer segment. Photoreceptor required for image-forming vision at low light intensity. Required for photoreceptor cell viability after birth. Light-induced isomerization of 11-cis to all-trans retinal triggers a conformational change that activates signaling via G-proteins. Subsequent receptor phosphorylation mediates displacement of the bound G-protein alpha subunit by the arrestin SAG and terminates signaling. The chain is Rhodopsin (RHO) from Felis catus (Cat).